Here is a 324-residue protein sequence, read N- to C-terminus: 2-dehydro-3-deoxygluconokinase (324 aa).

Substrate contacts are provided by residues 35–39 (GAESN), 106–108 (YYR), and Arg170. ATP-binding positions include 168–170 (NVR), 228–233 (KLGKEG), and 258–261 (GAGD). Substrate contacts are provided by Asp261 and Asp297. Asp261 serves as the catalytic Proton acceptor.

Belongs to the carbohydrate kinase PfkB family.

The enzyme catalyses 2-dehydro-3-deoxy-D-gluconate + ATP = 2-dehydro-3-deoxy-6-phospho-D-gluconate + ADP + H(+). It functions in the pathway carbohydrate acid metabolism; 2-dehydro-3-deoxy-D-gluconate degradation; D-glyceraldehyde 3-phosphate and pyruvate from 2-dehydro-3-deoxy-D-gluconate: step 1/2. Its function is as follows. Catalyzes the phosphorylation of 2-keto-3-deoxygluconate (KDG) to produce 2-keto-3-deoxy-6-phosphogluconate (KDPG). The chain is 2-dehydro-3-deoxygluconokinase (kdgK) from Bacillus subtilis (strain 168).